A 447-amino-acid chain; its full sequence is Serine/threonine-protein phosphatase 2A 55 kDa regulatory subunit B alpha isoform (447 aa).

Ala-2 carries the N-acetylalanine modification. WD repeat units lie at residues 11–80 (QWCF…FQSH), 94–174 (EKIN…IFAN), 175–218 (AHTY…VDIK), 227–270 (EVIT…KLFE), 288–325 (ISDV…TYQV), 347–381 (ECCW…TLEA), and 414–446 (DFNK…QDKV).

This sequence belongs to the phosphatase 2A regulatory subunit B family. PP2A consists of a common heterodimeric core enzyme, composed of a 36 kDa catalytic subunit (subunit C) and a 65 kDa constant regulatory subunit (PR65 or subunit A), that associates with a variety of regulatory subunits. Proteins that associate with the core dimer include three families of regulatory subunits B (the R2/B/PR55/B55, R3/B''/PR72/PR130/PR59 and R5/B'/B56 families), the 48 kDa variable regulatory subunit, viral proteins, and cell signaling molecules. Interacts with the PP2A C catalytic subunit PPP2CA. Interacts with the PP2A A subunit PPP2R1A. Found in a complex with at least ARL2, PPP2CB, PPP2R1A, PPP2R2A, PPP2R5E and TBCD. Interacts with MFHAS1; the interaction is direct. Interacts with PABIR1/FAM122A (via its N-terminus); the interaction is direct and inhibits PP2A activity. Interacts with ARPP19; the interaction is direct and inhibits PP2A activity. Interacts with CRTC3. Brain.

Substrate-recognition subunit of protein phosphatase 2A (PP2A) that plays a key role in cell cycle by controlling mitosis entry and exit. Involved in chromosome clustering during late mitosis by mediating dephosphorylation of MKI67. Essential for serine/threonine-protein phosphatase 2A-mediated dephosphorylation of WEE1, preventing its ubiquitin-mediated proteolysis, increasing WEE1 protein levels, and promoting the G2/M checkpoint. The protein is Serine/threonine-protein phosphatase 2A 55 kDa regulatory subunit B alpha isoform (Ppp2r2a) of Rattus norvegicus (Rat).